A 217-amino-acid polypeptide reads, in one-letter code: Gas vesicle protein F2 (217 aa).

Belongs to the gas vesicle GvpF/GvpL family. As to quaternary structure, binds GvpA.

The protein resides in the gas vesicle. Its subcellular location is the cytoplasm. In terms of biological role, a minor component of the gas vesicle, may be involved in preventing GvpA aggregation during gas vesicle nucleation. Gas vesicles are hollow, gas filled proteinaceous nanostructures found in several microbial planktonic microorganisms. They allow positioning of halobacteria at the optimal depth for growth in the poorly aerated, shallow brine pools of their habitat. Expression of 2 c-vac DNA fragments containing 2 divergently transcribed regions (gvpE-gvpF-gvpG-gvpH-gvpI-gvpJ-gvpK-gvpL-gvpM and gvpA-gvpC-gvpN-gvpO) allows H.volcanii to produce gas vesicles. Note that gvpD is not necessary for gas vesicle formation. In Halobacterium salinarum (strain ATCC 700922 / JCM 11081 / NRC-1) (Halobacterium halobium), this protein is Gas vesicle protein F2.